Reading from the N-terminus, the 452-residue chain is Adenylosuccinate synthetase 2 (452 aa).

GTP contacts are provided by residues 19–25 (GDEGKAR) and 47–49 (GHT). Catalysis depends on Asp-20, which acts as the Proton acceptor. Residues Asp-20 and Gly-47 each contribute to the Mg(2+) site. IMP contacts are provided by residues 20-23 (DEGK), 45-48 (NAGH), Thr-131, Arg-145, Gln-223, Thr-238, and Arg-338. His-48 acts as the Proton donor in catalysis. 334-340 (TGTGRPR) is a binding site for substrate. Residues Arg-340, 366–368 (KCD), and 437–439 (GLG) contribute to the GTP site.

This sequence belongs to the adenylosuccinate synthetase family. In terms of assembly, homodimer. Mg(2+) serves as cofactor.

The protein resides in the cytoplasm. The catalysed reaction is IMP + L-aspartate + GTP = N(6)-(1,2-dicarboxyethyl)-AMP + GDP + phosphate + 2 H(+). It participates in purine metabolism; AMP biosynthesis via de novo pathway; AMP from IMP: step 1/2. In terms of biological role, plays an important role in the de novo pathway of purine nucleotide biosynthesis. Catalyzes the first committed step in the biosynthesis of AMP from IMP. This Cupriavidus pinatubonensis (strain JMP 134 / LMG 1197) (Cupriavidus necator (strain JMP 134)) protein is Adenylosuccinate synthetase 2.